The following is a 97-amino-acid chain: NADH dehydrogenase [ubiquinone] 1 alpha subcomplex subunit 2 (97 aa).

A disulfide bond links cysteine 19 and cysteine 53.

It belongs to the complex I NDUFA2 subunit family. As to quaternary structure, complex I is composed of at least 49 different subunits.

Its subcellular location is the mitochondrion inner membrane. Accessory subunit of the mitochondrial membrane respiratory chain NADH dehydrogenase (Complex I), that is believed not to be involved in catalysis. Complex I functions in the transfer of electrons from NADH to the respiratory chain. The immediate electron acceptor for the enzyme is believed to be ubiquinone. The polypeptide is NADH dehydrogenase [ubiquinone] 1 alpha subcomplex subunit 2 (Arabidopsis thaliana (Mouse-ear cress)).